Consider the following 248-residue polypeptide: tRNA (guanine-N(1)-)-methyltransferase (248 aa).

S-adenosyl-L-methionine-binding positions include Gly126 and 150 to 155 (LGDYVL). Positions 224–248 (WRRTQQEERTRERRPDLWAAFDSED) are disordered. Basic and acidic residues predominate over residues 227 to 239 (TQQEERTRERRPD).

It belongs to the RNA methyltransferase TrmD family. As to quaternary structure, homodimer.

Its subcellular location is the cytoplasm. The catalysed reaction is guanosine(37) in tRNA + S-adenosyl-L-methionine = N(1)-methylguanosine(37) in tRNA + S-adenosyl-L-homocysteine + H(+). Functionally, specifically methylates guanosine-37 in various tRNAs. The polypeptide is tRNA (guanine-N(1)-)-methyltransferase (Micrococcus luteus (strain ATCC 4698 / DSM 20030 / JCM 1464 / CCM 169 / CCUG 5858 / IAM 1056 / NBRC 3333 / NCIMB 9278 / NCTC 2665 / VKM Ac-2230) (Micrococcus lysodeikticus)).